A 188-amino-acid chain; its full sequence is Adenine phosphoribosyltransferase (188 aa).

The protein belongs to the purine/pyrimidine phosphoribosyltransferase family. Homodimer.

It localises to the cytoplasm. It catalyses the reaction AMP + diphosphate = 5-phospho-alpha-D-ribose 1-diphosphate + adenine. Its pathway is purine metabolism; AMP biosynthesis via salvage pathway; AMP from adenine: step 1/1. In terms of biological role, catalyzes a salvage reaction resulting in the formation of AMP, that is energically less costly than de novo synthesis. This Paraburkholderia phytofirmans (strain DSM 17436 / LMG 22146 / PsJN) (Burkholderia phytofirmans) protein is Adenine phosphoribosyltransferase.